A 587-amino-acid polypeptide reads, in one-letter code: Urease subunit alpha (587 aa).

Residues 134–572 (GGIDTHVHFI…LPLAQRYLYT (439 aa)) enclose the Urease domain. Positions 139, 141, and 222 each coordinate Ni(2+). At Lys-222 the chain carries N6-carboxylysine. His-224 is a binding site for substrate. 2 residues coordinate Ni(2+): His-251 and His-277. The active-site Proton donor is the His-325. Asp-365 is a binding site for Ni(2+).

It belongs to the metallo-dependent hydrolases superfamily. Urease alpha subunit family. As to quaternary structure, heterotrimer of UreA (gamma), UreB (beta) and UreC (alpha) subunits. Three heterotrimers associate to form the active enzyme. Ni cation is required as a cofactor. Carboxylation allows a single lysine to coordinate two nickel ions.

It is found in the cytoplasm. It catalyses the reaction urea + 2 H2O + H(+) = hydrogencarbonate + 2 NH4(+). It participates in nitrogen metabolism; urea degradation; CO(2) and NH(3) from urea (urease route): step 1/1. The chain is Urease subunit alpha from Clostridium perfringens.